A 156-amino-acid chain; its full sequence is Small ribosomal subunit protein eS19A (156 aa).

It belongs to the eukaryotic ribosomal protein eS19 family.

The protein is Small ribosomal subunit protein eS19A (RpS19a) of Drosophila melanogaster (Fruit fly).